Here is a 512-residue protein sequence, read N- to C-terminus: GMP synthase [glutamine-hydrolyzing] (512 aa).

The Glutamine amidotransferase type-1 domain maps to 7–197; that stretch reads TIIVLDFGSQ…VFGVCGCSEG (191 aa). Cysteine 84 (nucleophile) is an active-site residue. Catalysis depends on residues histidine 171 and glutamate 173. Residues 198 to 387 enclose the GMPS ATP-PPase domain; that stretch reads WNMENFIEVE…LGIPDEIVWR (190 aa). 225–231 contacts ATP; that stretch reads SGGVDSS.

Homodimer.

The catalysed reaction is XMP + L-glutamine + ATP + H2O = GMP + L-glutamate + AMP + diphosphate + 2 H(+). It functions in the pathway purine metabolism; GMP biosynthesis; GMP from XMP (L-Gln route): step 1/1. Catalyzes the synthesis of GMP from XMP. In Bacillus cereus (strain B4264), this protein is GMP synthase [glutamine-hydrolyzing].